The following is a 408-amino-acid chain: Peptidase T (408 aa).

Histidine 78 contacts Zn(2+). The active site involves aspartate 80. Aspartate 141 lines the Zn(2+) pocket. Glutamate 175 serves as the catalytic Proton acceptor. Zn(2+) is bound by residues glutamate 176, aspartate 198, and histidine 380.

It belongs to the peptidase M20B family. It depends on Zn(2+) as a cofactor.

It is found in the cytoplasm. The enzyme catalyses Release of the N-terminal residue from a tripeptide.. Its function is as follows. Cleaves the N-terminal amino acid of tripeptides. This chain is Peptidase T, found in Clostridium botulinum (strain 657 / Type Ba4).